The following is a 293-amino-acid chain: MPWIQLKITTTGQQADTLSDALTESGAVSVTFQDTHDVPVYEPLPGETRLWGDTDVIGLYDAATDIATVLDVLKTHPLLGADFTYKIEQLEDKDWEREWMDNFHPMRFGERLWICPSWRPVPDPQAVNVMLDPGLAFGTGTHPTTALCLQWLDGLDLRGKTVIDFGCGSGILAIAALKLGAAHAVGIDIDPQAILASRDNAQRNGVAELLTLYLPQQQPQDLHANVVVANILAGPLRELAPLIIDLPLPGGYLGLSGILASQAESVAQAYAAAFSLDPVAEKEEWCRITGTRR.

Threonine 145, glycine 166, aspartate 188, and asparagine 230 together coordinate S-adenosyl-L-methionine.

This sequence belongs to the methyltransferase superfamily. PrmA family.

The protein resides in the cytoplasm. It catalyses the reaction L-lysyl-[protein] + 3 S-adenosyl-L-methionine = N(6),N(6),N(6)-trimethyl-L-lysyl-[protein] + 3 S-adenosyl-L-homocysteine + 3 H(+). Its function is as follows. Methylates ribosomal protein L11. The chain is Ribosomal protein L11 methyltransferase from Sodalis glossinidius (strain morsitans).